The primary structure comprises 366 residues: DNA-directed RNA polymerase subunit alpha (366 aa).

The alpha N-terminal domain (alpha-NTD) stretch occupies residues 1–233 (MVREKVRVST…DLFLPFLHAE (233 aa)). Residues 264 to 366 (KNEIALKSIF…KDEMGFESLE (103 aa)) form an alpha C-terminal domain (alpha-CTD) region.

It belongs to the RNA polymerase alpha chain family. In terms of assembly, in plastids the minimal PEP RNA polymerase catalytic core is composed of four subunits: alpha, beta, beta', and beta''. When a (nuclear-encoded) sigma factor is associated with the core the holoenzyme is formed, which can initiate transcription.

Its subcellular location is the plastid. The protein localises to the chloroplast. It carries out the reaction RNA(n) + a ribonucleoside 5'-triphosphate = RNA(n+1) + diphosphate. Its function is as follows. DNA-dependent RNA polymerase catalyzes the transcription of DNA into RNA using the four ribonucleoside triphosphates as substrates. The chain is DNA-directed RNA polymerase subunit alpha from Oenothera elata subsp. hookeri (Hooker's evening primrose).